The chain runs to 360 residues: Putative FBD-associated F-box protein At5g56430 (360 aa).

The F-box domain maps to 1–53 (MRNISDLPNDLLVKILSLIPIKVAASTSLLSKRWGSVWKLIPTLDYDGTYSAA). Kelch repeat units lie at residues 140–186 (IRYT…EQLD) and 235–285 (VMCS…SVPE). One can recognise an FBD domain in the interval 276–326 (KWEQPNSVPECLLVSLETVKWILYKGTQEEKDVVKYLLKNGNFIKTMSIRF).

The chain is Putative FBD-associated F-box protein At5g56430 from Arabidopsis thaliana (Mouse-ear cress).